An 864-amino-acid chain; its full sequence is Alanine--tRNA ligase (864 aa).

Zn(2+) contacts are provided by His-534, His-538, Cys-639, and His-643.

This sequence belongs to the class-II aminoacyl-tRNA synthetase family. Requires Zn(2+) as cofactor.

The protein resides in the cytoplasm. The catalysed reaction is tRNA(Ala) + L-alanine + ATP = L-alanyl-tRNA(Ala) + AMP + diphosphate. In terms of biological role, catalyzes the attachment of alanine to tRNA(Ala) in a two-step reaction: alanine is first activated by ATP to form Ala-AMP and then transferred to the acceptor end of tRNA(Ala). Also edits incorrectly charged Ser-tRNA(Ala) and Gly-tRNA(Ala) via its editing domain. The sequence is that of Alanine--tRNA ligase from Aster yellows witches'-broom phytoplasma (strain AYWB).